The chain runs to 152 residues: 3-dehydroquinate dehydratase (152 aa).

The active-site Proton acceptor is the tyrosine 23. Substrate-binding residues include asparagine 75, histidine 81, and aspartate 88. Histidine 101 (proton donor) is an active-site residue. Substrate contacts are provided by residues 102 to 103 (IS) and arginine 112.

This sequence belongs to the type-II 3-dehydroquinase family. Homododecamer.

The catalysed reaction is 3-dehydroquinate = 3-dehydroshikimate + H2O. Its pathway is metabolic intermediate biosynthesis; chorismate biosynthesis; chorismate from D-erythrose 4-phosphate and phosphoenolpyruvate: step 3/7. Functionally, catalyzes a trans-dehydration via an enolate intermediate. In Alkalilimnicola ehrlichii (strain ATCC BAA-1101 / DSM 17681 / MLHE-1), this protein is 3-dehydroquinate dehydratase.